The primary structure comprises 841 residues: Probable outer membrane usher protein EcpC (841 aa).

A signal peptide spans 1–29 (MPLRRFSPGLKAQFAFGMVFLFVQPDASA).

Belongs to the EcpC/MatD family.

Functionally, part of the ecpRABCDE operon, which encodes the E.coli common pilus (ECP). ECP is found in both commensal and pathogenic strains and plays a dual role in early-stage biofilm development and host cell recognition. The chain is Probable outer membrane usher protein EcpC (ecpC) from Escherichia coli O6:H1 (strain CFT073 / ATCC 700928 / UPEC).